We begin with the raw amino-acid sequence, 432 residues long: Crenactin (432 aa).

ATP-binding positions include 20 to 24, 182 to 184, 235 to 239, 354 to 358, and Gln399; these read TSYVK, GGH, EVVKR, and GAFSW.

This sequence belongs to the actin family. Monomer. The crenactin monomers polymerize into right-handed helical filaments, with 8 subunits per complete turn of the helix. Forms single-stranded filaments under high salt concentrations and double-stranded filaments under low salt concentrations. Interacts with arcadin-1 and arcadin-2.

The protein localises to the cytoplasm. The protein resides in the cytoskeleton. It carries out the reaction ATP + H2O = ADP + phosphate + H(+). With respect to regulation, crenactin polymerization is inhibited by interaction with arcadin-2. Also significantly inhibited by elevated antibiotic A22 concentrations. Functionally, forms the backbone of an actin-like archaeal cytoskeleton, which is involved in cell shape determination. Has ATPase activity. Shows highest activity towards ATP or GTP as nucleotide, and only residual activity on UTP, CTP and dNTPs. The protein is Crenactin of Pyrobaculum calidifontis (strain DSM 21063 / JCM 11548 / VA1).